Consider the following 226-residue polypeptide: Ribose-5-phosphate isomerase A (226 aa).

Substrate contacts are provided by residues 26–29 (TGST), 82–85 (DGAD), and 95–98 (KGGG). Glutamate 104 (proton acceptor) is an active-site residue. Position 122 (lysine 122) interacts with substrate.

The protein belongs to the ribose 5-phosphate isomerase family. Homodimer.

The catalysed reaction is aldehydo-D-ribose 5-phosphate = D-ribulose 5-phosphate. The protein operates within carbohydrate degradation; pentose phosphate pathway; D-ribose 5-phosphate from D-ribulose 5-phosphate (non-oxidative stage): step 1/1. Functionally, catalyzes the reversible conversion of ribose-5-phosphate to ribulose 5-phosphate. In Streptococcus uberis (strain ATCC BAA-854 / 0140J), this protein is Ribose-5-phosphate isomerase A.